Reading from the N-terminus, the 323-residue chain is Acetylglutamate kinase (323 aa).

Residues 90–91 (GG), Arg-112, and Asn-218 contribute to the substrate site.

This sequence belongs to the acetylglutamate kinase family. ArgB subfamily.

The protein localises to the cytoplasm. It catalyses the reaction N-acetyl-L-glutamate + ATP = N-acetyl-L-glutamyl 5-phosphate + ADP. The protein operates within amino-acid biosynthesis; L-arginine biosynthesis; N(2)-acetyl-L-ornithine from L-glutamate: step 2/4. Functionally, catalyzes the ATP-dependent phosphorylation of N-acetyl-L-glutamate. This Ehrlichia canis (strain Jake) protein is Acetylglutamate kinase.